The sequence spans 526 residues: Carotenoid cleavage oxygenase 1 (526 aa).

The tract at residues 1–33 is disordered; the sequence is MAEYVFSDAPKDSHGNGVKDAVPGKQPEELPPA. Piceatannol contacts are provided by tyrosine 133 and lysine 164. The trans-resveratrol site is built by tyrosine 133 and lysine 164. 3 residues coordinate Fe cation: histidine 197, histidine 248, and histidine 313. Glutamate 383 provides a ligand contact to piceatannol. Residue glutamate 383 participates in trans-resveratrol binding. Position 510 (histidine 510) interacts with Fe cation.

The protein belongs to the carotenoid oxygenase family. Fe(2+) serves as cofactor.

The catalysed reaction is trans-resveratrol + O2 = 3,5-dihydroxybenzaldehyde + 4-hydroxybenzaldehyde. The enzyme catalyses piceatannol + O2 = 3,5-dihydroxybenzaldehyde + 3,4-dihydroxybenzaldehyde. In terms of biological role, dioxygenase that cleaves the interphenyl C-alpha-C-beta double bond of resveratrol to yield 3,5-dihydroxybenzaldehyde and 4-hydroxybenzaldehyde. Also cleaves piceatannol, a compound that differs from resveratrol only in the occurrence of an additional hydroxyl group, which leads to the production of 3,4-dihydroxybenzaldehyde and 3,5-hydroxybenzaldehyde. Is not able to cleave trans-stilbene, 4-monohydroxy-trans-stilbene, 3,5-dihydroxy-trans-stilbene (pinosylvin), trismethoxy-resveratrol, and 3,3',5-trihydroxy-4'-methoxystilbene-3-O-beta-D-glucoside. Is not involved in carotenoid metabolism. The chain is Carotenoid cleavage oxygenase 1 from Neurospora crassa (strain ATCC 24698 / 74-OR23-1A / CBS 708.71 / DSM 1257 / FGSC 987).